The following is a 166-amino-acid chain: Coiled-coil domain-containing protein 12 (166 aa).

Residue methionine 1 is modified to N-acetylmethionine. The interval 1 to 56 (MEATTAGVGRLEEEALRRKERLKALREKTGRKDKEDGEPKTKHLREEEEEGEKHRE) is disordered. Residues 8 to 28 (VGRLEEEALRRKERLKALREK) are a coiled coil. The span at 10–56 (RLEEEALRRKERLKALREKTGRKDKEDGEPKTKHLREEEEEGEKHRE) shows a compositional bias: basic and acidic residues. Lysine 53 carries the N6-acetyllysine modification. Lysine 94 participates in a covalent cross-link: Glycyl lysine isopeptide (Lys-Gly) (interchain with G-Cter in SUMO2). Residues 117–144 (KRDVAKKLEKLKKRTQRAIAELIRERLK) are a coiled coil. The tract at residues 147–166 (EDSLASAVDAATEQKTCDSD) is disordered. Phosphoserine occurs at positions 149 and 165.

This chain is Coiled-coil domain-containing protein 12 (CCDC12), found in Homo sapiens (Human).